Consider the following 317-residue polypeptide: DNA-directed RNA polymerase subunit alpha (317 aa).

Residues Met1–Ala234 are alpha N-terminal domain (alpha-NTD). The tract at residues Glu249 to Asn317 is alpha C-terminal domain (alpha-CTD).

It belongs to the RNA polymerase alpha chain family. As to quaternary structure, homodimer. The RNAP catalytic core consists of 2 alpha, 1 beta, 1 beta' and 1 omega subunit. When a sigma factor is associated with the core the holoenzyme is formed, which can initiate transcription.

The enzyme catalyses RNA(n) + a ribonucleoside 5'-triphosphate = RNA(n+1) + diphosphate. DNA-dependent RNA polymerase catalyzes the transcription of DNA into RNA using the four ribonucleoside triphosphates as substrates. The polypeptide is DNA-directed RNA polymerase subunit alpha (Mesoplasma florum (strain ATCC 33453 / NBRC 100688 / NCTC 11704 / L1) (Acholeplasma florum)).